The following is a 269-amino-acid chain: Cytochrome c oxidase subunit 3 (269 aa).

Transmembrane regions (helical) follow at residues 19-39 (PWPF…TLYL), 44-64 (HSSV…YLWF), 87-107 (IGFM…FWAF), 135-155 (LEVP…LTYA), 170-190 (GLYM…YEYW), 205-225 (FYFA…LLLA), and 247-267 (IYYW…IYIW).

The protein belongs to the cytochrome c oxidase subunit 3 family. As to quaternary structure, component of the cytochrome c oxidase (complex IV, CIV), a multisubunit enzyme composed of a catalytic core of 3 subunits and several supernumerary subunits. The complex exists as a monomer or a dimer and forms supercomplexes (SCs) in the inner mitochondrial membrane with ubiquinol-cytochrome c oxidoreductase (cytochrome b-c1 complex, complex III, CIII).

It is found in the mitochondrion inner membrane. The enzyme catalyses 4 Fe(II)-[cytochrome c] + O2 + 8 H(+)(in) = 4 Fe(III)-[cytochrome c] + 2 H2O + 4 H(+)(out). Its function is as follows. Component of the cytochrome c oxidase, the last enzyme in the mitochondrial electron transport chain which drives oxidative phosphorylation. The respiratory chain contains 3 multisubunit complexes succinate dehydrogenase (complex II, CII), ubiquinol-cytochrome c oxidoreductase (cytochrome b-c1 complex, complex III, CIII) and cytochrome c oxidase (complex IV, CIV), that cooperate to transfer electrons derived from NADH and succinate to molecular oxygen, creating an electrochemical gradient over the inner membrane that drives transmembrane transport and the ATP synthase. Cytochrome c oxidase is the component of the respiratory chain that catalyzes the reduction of oxygen to water. Electrons originating from reduced cytochrome c in the intermembrane space (IMS) are transferred via the dinuclear copper A center (CU(A)) of subunit 2 and heme A of subunit 1 to the active site in subunit 1, a binuclear center (BNC) formed by heme A3 and copper B (CU(B)). The BNC reduces molecular oxygen to 2 water molecules using 4 electrons from cytochrome c in the IMS and 4 protons from the mitochondrial matrix. In Schizosaccharomyces pombe (strain 972 / ATCC 24843) (Fission yeast), this protein is Cytochrome c oxidase subunit 3 (cox3).